The chain runs to 371 residues: Fe(3+) ions import ATP-binding protein FbpC (371 aa).

The ABC transporter domain occupies 5-235 (IKIENAQKRY…PANLFVATFI (231 aa)). 37–44 (GPSGCGKT) lines the ATP pocket.

It belongs to the ABC transporter superfamily. Fe(3+) ion importer (TC 3.A.1.10) family. The complex is composed of two ATP-binding proteins (FbpC), two transmembrane proteins (FbpB) and a solute-binding protein (FbpA).

Its subcellular location is the cell inner membrane. It carries out the reaction Fe(3+)(out) + ATP + H2O = Fe(3+)(in) + ADP + phosphate + H(+). In terms of biological role, part of the ABC transporter complex FbpABC involved in Fe(3+) ions import. Responsible for energy coupling to the transport system. The sequence is that of Fe(3+) ions import ATP-binding protein FbpC from Fusobacterium nucleatum subsp. nucleatum (strain ATCC 25586 / DSM 15643 / BCRC 10681 / CIP 101130 / JCM 8532 / KCTC 2640 / LMG 13131 / VPI 4355).